Consider the following 245-residue polypeptide: Aliphatic sulfonates import ATP-binding protein SsuB (245 aa).

Positions 6–225 constitute an ABC transporter domain; that stretch reads VTVRGLRRAF…SRGDEGFDDL (220 aa). Residue 38-45 coordinates ATP; it reads GLSGSGKS.

It belongs to the ABC transporter superfamily. Aliphatic sulfonates importer (TC 3.A.1.17.2) family. The complex is composed of two ATP-binding proteins (SsuB), two transmembrane proteins (SsuC) and a solute-binding protein (SsuA).

The protein resides in the cell membrane. It carries out the reaction ATP + H2O + aliphatic sulfonate-[sulfonate-binding protein]Side 1 = ADP + phosphate + aliphatic sulfonateSide 2 + [sulfonate-binding protein]Side 1.. Part of the ABC transporter complex SsuABC involved in aliphatic sulfonates import. Responsible for energy coupling to the transport system. The chain is Aliphatic sulfonates import ATP-binding protein SsuB from Mycobacterium sp. (strain MCS).